Consider the following 34-residue polypeptide: Photosystem II reaction center protein Psb30 (34 aa).

The helical transmembrane segment at 6–26 (VIAQLVSLGVIVLVGPAVIIL) threads the bilayer.

This sequence belongs to the Psb30/Ycf12 family. In terms of assembly, PSII is composed of 1 copy each of membrane proteins PsbA, PsbB, PsbC, PsbD, PsbE, PsbF, PsbH, PsbI, PsbJ, PsbK, PsbL, PsbM, PsbT, PsbX, PsbY, PsbZ, Psb30/Ycf12, peripheral proteins of the oxygen-evolving complex and a large number of cofactors. It forms dimeric complexes.

Its subcellular location is the plastid. The protein resides in the chloroplast thylakoid membrane. Its function is as follows. A core subunit of photosystem II (PSII), probably helps stabilize the reaction center. This is Photosystem II reaction center protein Psb30 from Pyropia yezoensis (Susabi-nori).